The sequence spans 181 residues: ADP-ribosylation factor 1 (181 aa).

The N-myristoyl glycine moiety is linked to residue Gly-2. Residues 25-32 (LDGAGKTT), Thr-48, Gly-70, 126-129 (NKQD), and 160-161 (AT) contribute to the GTP site. Residue Lys-127 forms a Glycyl lysine isopeptide (Lys-Gly) (interchain with G-Cter in ubiquitin) linkage.

Belongs to the small GTPase superfamily. Arf family. Interacts with RUD3. Interacts with VPS13 (via C-terminal part); the interaction is direct.

It is found in the golgi apparatus. The catalysed reaction is GTP + H2O = GDP + phosphate + H(+). Its function is as follows. GTP-binding protein involved in Golgi vesicle trafficking. May modulate vesicle budding and uncoating within the Golgi apparatus. May recruit the lipid transfer protein VPS13 to Golgi membranes. Recruits polyadenylate-binding protein PAB1 to COPI vesicles, and this is required for correct localization of the asymmetrically distributed ASH1 mRNA. This chain is ADP-ribosylation factor 1 (ARF1), found in Saccharomyces cerevisiae (strain ATCC 204508 / S288c) (Baker's yeast).